Consider the following 420-residue polypeptide: Enolase (420 aa).

(2R)-2-phosphoglycerate is bound at residue glutamine 162. Catalysis depends on glutamate 206, which acts as the Proton donor. Positions 241, 282, and 308 each coordinate Mg(2+). (2R)-2-phosphoglycerate contacts are provided by lysine 333, arginine 362, serine 363, and lysine 384. The Proton acceptor role is filled by lysine 333.

This sequence belongs to the enolase family. It depends on Mg(2+) as a cofactor.

Its subcellular location is the cytoplasm. The protein resides in the secreted. The protein localises to the cell surface. It carries out the reaction (2R)-2-phosphoglycerate = phosphoenolpyruvate + H2O. It functions in the pathway carbohydrate degradation; glycolysis; pyruvate from D-glyceraldehyde 3-phosphate: step 4/5. In terms of biological role, catalyzes the reversible conversion of 2-phosphoglycerate (2-PG) into phosphoenolpyruvate (PEP). It is essential for the degradation of carbohydrates via glycolysis. This chain is Enolase, found in Methanothrix thermoacetophila (strain DSM 6194 / JCM 14653 / NBRC 101360 / PT) (Methanosaeta thermophila).